The primary structure comprises 381 residues: tRNA pseudouridine synthase D (381 aa).

Residue Asp-81 is the Nucleophile of the active site. The TRUD domain maps to 160 to 335 (GMPNYFGSQR…TLGSRRFFWV (176 aa)).

This sequence belongs to the pseudouridine synthase TruD family.

It carries out the reaction uridine(13) in tRNA = pseudouridine(13) in tRNA. Responsible for synthesis of pseudouridine from uracil-13 in transfer RNAs. In Helicobacter acinonychis (strain Sheeba), this protein is tRNA pseudouridine synthase D.